A 187-amino-acid polypeptide reads, in one-letter code: Elongation factor P (187 aa).

This sequence belongs to the elongation factor P family.

It localises to the cytoplasm. The protein operates within protein biosynthesis; polypeptide chain elongation. Its function is as follows. Involved in peptide bond synthesis. Stimulates efficient translation and peptide-bond synthesis on native or reconstituted 70S ribosomes in vitro. Probably functions indirectly by altering the affinity of the ribosome for aminoacyl-tRNA, thus increasing their reactivity as acceptors for peptidyl transferase. This is Elongation factor P from Flavobacterium psychrophilum (strain ATCC 49511 / DSM 21280 / CIP 103535 / JIP02/86).